Reading from the N-terminus, the 578-residue chain is Frizzled and smoothened-like protein Q (578 aa).

Positions Met-1 to Ser-23 are cleaved as a signal peptide. Residues Gln-24–Asn-233 lie on the Extracellular side of the membrane. The 131-residue stretch at Lys-27 to Thr-157 folds into the FZ domain. Intrachain disulfides connect Cys-32–Cys-95, Cys-41–Cys-88, Cys-79–Cys-128, and Cys-121–Cys-141. Asn-46, Asn-64, Asn-99, and Asn-104 each carry an N-linked (GlcNAc...) asparagine glycan. N-linked (GlcNAc...) asparagine glycosylation is found at Asn-144, Asn-155, Asn-181, and Asn-233. A helical transmembrane segment spans residues Tyr-234 to Leu-254. The Cytoplasmic portion of the chain corresponds to Pro-255 to Arg-261. A helical membrane pass occupies residues Met-262 to Gln-282. The Extracellular portion of the chain corresponds to Ser-283–Cys-305. N-linked (GlcNAc...) asparagine glycosylation occurs at Asn-289. The chain crosses the membrane as a helical span at residues Leu-306–Ile-326. Over Ala-327–Lys-341 the chain is Cytoplasmic. The helical transmembrane segment at Phe-342–Phe-362 threads the bilayer. The Extracellular segment spans residues Gly-363–Ser-388. The chain crosses the membrane as a helical span at residues Phe-389–Ile-409. Residues Asn-410 to Arg-422 are Cytoplasmic-facing. The chain crosses the membrane as a helical span at residues Ile-423 to Phe-443. Residues Ala-444 to Asn-490 are Extracellular-facing. A helical transmembrane segment spans residues Ile-491–Val-511. Topologically, residues Ile-512–Pro-578 are cytoplasmic. Residues Asn-544 to Gly-556 are compositionally biased toward low complexity. The interval Asn-544–Pro-578 is disordered. A compositionally biased stretch (polar residues) spans Thr-563–Pro-578.

This sequence belongs to the G-protein coupled receptor Fz/Smo family.

The protein resides in the membrane. The protein is Frizzled and smoothened-like protein Q (fslQ) of Dictyostelium discoideum (Social amoeba).